Consider the following 766-residue polypeptide: Single-minded homolog 1 (766 aa).

A bHLH domain is found at 1–53 (MKEKSKNAARTRREKENSEFYELAKLLPLPSAITSQLDKASIIRLTTSYLKMR). PAS domains lie at 77-147 (GREL…QPYH) and 218-288 (PPSA…LVKG). Positions 292-335 (TKYYRFLAKHGGWVWVQSYATIVHNSRSSRPHCIVSVNYVLTDT) constitute a PAC domain. The Single-minded C-terminal domain maps to 336 to 766 (EYKGLQLSLD…GTSVIITNGS (431 aa)). Polar residues predominate over residues 353-365 (AFSYTSSSTPTMT). 2 disordered regions span residues 353 to 431 (AFSY…SQHD) and 528 to 563 (WDED…EPSK). The short motif at 368-387 (RKGAKSRLSSSKSKSRTSPY) is the Nuclear localization signal element. Residues 373–385 (SRLSSSKSKSRTS) show a composition bias toward low complexity. The segment covering 394 to 404 (HTERSESDHDS) has biased composition (basic and acidic residues).

As to quaternary structure, efficient DNA binding requires dimerization with another bHLH protein. Heterodimer; forms a heterodimer with ARNT, ARNT2.

It localises to the nucleus. In terms of biological role, transcriptional factor that may have pleiotropic effects during embryogenesis and in the adult. The polypeptide is Single-minded homolog 1 (SIM1) (Homo sapiens (Human)).